The primary structure comprises 297 residues: N-acetylneuraminate lyase (297 aa).

2 residues coordinate aceneuramate: S47 and T48. Residue Y137 is the Proton donor of the active site. Residue K165 is the Schiff-base intermediate with substrate of the active site. Aceneuramate-binding residues include T167, G189, D191, E192, and S208.

It belongs to the DapA family. NanA subfamily. In terms of assembly, homotetramer.

The protein resides in the cytoplasm. It carries out the reaction aceneuramate = aldehydo-N-acetyl-D-mannosamine + pyruvate. The protein operates within amino-sugar metabolism; N-acetylneuraminate degradation; D-fructose 6-phosphate from N-acetylneuraminate: step 1/5. Its function is as follows. Catalyzes the reversible aldol cleavage of N-acetylneuraminic acid (sialic acid; Neu5Ac) to form pyruvate and N-acetylmannosamine (ManNAc) via a Schiff base intermediate. In Salmonella choleraesuis (strain SC-B67), this protein is N-acetylneuraminate lyase.